The chain runs to 260 residues: Imidazole glycerol phosphate synthase subunit HisF (260 aa).

Catalysis depends on residues Asp11 and Asp130.

It belongs to the HisA/HisF family. As to quaternary structure, heterodimer of HisH and HisF.

It is found in the cytoplasm. The enzyme catalyses 5-[(5-phospho-1-deoxy-D-ribulos-1-ylimino)methylamino]-1-(5-phospho-beta-D-ribosyl)imidazole-4-carboxamide + L-glutamine = D-erythro-1-(imidazol-4-yl)glycerol 3-phosphate + 5-amino-1-(5-phospho-beta-D-ribosyl)imidazole-4-carboxamide + L-glutamate + H(+). It participates in amino-acid biosynthesis; L-histidine biosynthesis; L-histidine from 5-phospho-alpha-D-ribose 1-diphosphate: step 5/9. In terms of biological role, IGPS catalyzes the conversion of PRFAR and glutamine to IGP, AICAR and glutamate. The HisF subunit catalyzes the cyclization activity that produces IGP and AICAR from PRFAR using the ammonia provided by the HisH subunit. This Desulfatibacillum aliphaticivorans protein is Imidazole glycerol phosphate synthase subunit HisF.